A 205-amino-acid polypeptide reads, in one-letter code: MQPDLSPQLAMVLNYIRHFIDINGYPPSIRDICKATGLRSSSTVYNYLNKLEEKGYIRRDPSRSRAIEILTPYPALTRAKNMVSVPLLGKITAGQPILAFENIEDVFPLPADLAGAENAFMLHVSGDSMIEAGILDGDYLIVRPQDTAENGDIVVALLEDEATVKYFYRYPDHIELVPANSSMQPLIVHKVTILGKVVGLYRHFS.

Residues 29 to 49 (IRDICKATGLRSSSTVYNYLN) constitute a DNA-binding region (H-T-H motif). Active-site for autocatalytic cleavage activity residues include Ser-128 and Lys-165.

This sequence belongs to the peptidase S24 family. Homodimer.

The catalysed reaction is Hydrolysis of Ala-|-Gly bond in repressor LexA.. Represses a number of genes involved in the response to DNA damage (SOS response), including recA and lexA. In the presence of single-stranded DNA, RecA interacts with LexA causing an autocatalytic cleavage which disrupts the DNA-binding part of LexA, leading to derepression of the SOS regulon and eventually DNA repair. This Moorella thermoacetica (strain ATCC 39073 / JCM 9320) protein is LexA repressor.